A 953-amino-acid polypeptide reads, in one-letter code: Leucine-rich repeat receptor protein kinase HPCA1 (953 aa).

The signal sequence occupies residues 1-23 (MSSRTGASLLLILFFFQICSVSA). The Extracellular segment spans residues 24–558 (LTNGLDASAL…EVSSKSSNKS (535 aa)). LRR repeat units follow at residues 64 to 88 (NDRVVSISLGNLDLEGKLPADISFL), 89 to 113 (SELRILDLSYNPKLSGPLPPNIGNL), 115 to 137 (KLRNLILVGCSFSGQIPESIGTL), 138 to 162 (KELIYLSLNLNKFSGTIPPSIGLLS), 164 to 187 (LYWFDIADNQIEGELPVSNGTSAP), and 192 to 216 (LLQTKHFHFGKNKLSGNIPKELFSS). An N-linked (GlcNAc...) asparagine glycan is attached at Asn-182. Residue Asn-217 is glycosylated (N-linked (GlcNAc...) asparagine). LRR repeat units follow at residues 218–241 (MSLIHVLFDGNQFTGEIPETLSLV), 242–265 (KTLTVLRLDRNKLIGDIPSYLNNL), 266–290 (TNLNELYLANNRFTGTLPNLTSLTS), 292–311 (YTLDVSNNTLDFSPIPSWIS), 313–337 (LPSLSTLRMEGIQLNGPIPISFFSP), 339–361 (QLQTVILKRNSIVESLDFGTDVS), and 362–384 (SQLEFVDLQYNEITDYKPSANKV). Asn-264, Asn-284, and Asn-298 each carry an N-linked (GlcNAc...) asparagine glycan. Asn-411 is a glycosylation site (N-linked (GlcNAc...) asparagine). 2 disulfides stabilise this stretch: Cys-421–Cys-424 and Cys-434–Cys-436. 4 N-linked (GlcNAc...) asparagine glycosylation sites follow: Asn-456, Asn-459, Asn-510, and Asn-523. Residues 559–579 (ILIGAVVGVVVLLLLLTIAGI) form a helical membrane-spanning segment. Residues 580-953 (YALRQKKRAE…NFPASKLEPQ (374 aa)) are Cytoplasmic-facing. Phosphoserine is present on residues Ser-606 and Ser-607. Residues 631 to 905 (FSEANDVGGG…EVVKEIENIM (275 aa)) form the Protein kinase domain. Residues 637 to 645 (VGGGGYGKV) and Lys-659 each bind ATP. The active-site Proton acceptor is Asp-755. Thr-786, Thr-789, and Thr-790 each carry phosphothreonine. Residues 912–921 (PNSDSATSSR) show a composition bias toward polar residues. The disordered stretch occupies residues 912–953 (PNSDSATSSRTYEDAIKGSGDPYGSESFQYSGNFPASKLEPQ). Ser-942 carries the phosphoserine modification.

It belongs to the protein kinase superfamily. Ser/Thr protein kinase family. Post-translationally, autophosphorylated at Ser-606, Ser-607, Thr-786, Thr-789, Thr-790 and Ser-942 in response to extracellular hydrogen peroxide. In terms of tissue distribution, widely expressed.

The protein localises to the cell membrane. The enzyme catalyses L-seryl-[protein] + ATP = O-phospho-L-seryl-[protein] + ADP + H(+). It catalyses the reaction L-threonyl-[protein] + ATP = O-phospho-L-threonyl-[protein] + ADP + H(+). With respect to regulation, activated by autophosphorylation on serine and threonine residues in response to extracellular hydrogen peroxide. Functionally, leucine-rich repeat receptor protein kinase that acts as sensor of extracellular hydrogen peroxide. Required for intracellular calcium influx in response to extracellular hydrogen peroxide. Mediates hydrogen peroxide-induced activation of calcium channels in guard cells and is required for stomatal closure. The sequence is that of Leucine-rich repeat receptor protein kinase HPCA1 from Arabidopsis thaliana (Mouse-ear cress).